The sequence spans 320 residues: L-lactate dehydrogenase (320 aa).

NAD(+) contacts are provided by residues valine 18, aspartate 39, arginine 44, tyrosine 69, and 83-84; that span reads GA. Substrate is bound by residues glutamine 86 and arginine 92. Residues serine 105, 122–124, and serine 147 each bind NAD(+); that span reads AAN. 124–127 serves as a coordination point for substrate; that stretch reads NPVD. 152–155 lines the substrate pocket; the sequence is DSSR. Histidine 179 (proton acceptor) is an active-site residue. The residue at position 223 (tyrosine 223) is a Phosphotyrosine. A substrate-binding site is contributed by threonine 232.

It belongs to the LDH/MDH superfamily. LDH family. Homotetramer.

It localises to the cytoplasm. The catalysed reaction is (S)-lactate + NAD(+) = pyruvate + NADH + H(+). The protein operates within fermentation; pyruvate fermentation to lactate; (S)-lactate from pyruvate: step 1/1. With respect to regulation, the quaternary structure is constitutionally similar to the active conformation of allosteric LDHs, and the regulation is independent of the fructose 1,6-bisphosphate-binding site. In terms of biological role, catalyzes the conversion of lactate to pyruvate. The sequence is that of L-lactate dehydrogenase from Lactiplantibacillus pentosus (Lactobacillus pentosus).